The primary structure comprises 264 residues: MNVSVNIKNVTKEYRIYRTNKERMKDALIPKHKNKTFFALDDISLKAYEGDVIGLVGINGSGKSTLSNIIGGSLSPTVGKVDRNGEVSVIAISAGLSGQLTGIENIEFKMLCMGFKRKEIKAMTPKIIEFSELGEFIYQPVKKYSSGMRAKLGFSINITVNPDILVIDEALSVGDQTFAQKCLDKIYEFKEQNKTIFFVSHNLGQVRQFCTKIAWIEGGKLKDYGELDDVLPKYEAFLNDFKKKSKAEQKEFRNKLDESRFVIK.

One can recognise an ABC transporter domain in the interval 5-243 (VNIKNVTKEY…YEAFLNDFKK (239 aa)). 57 to 64 (GINGSGKS) serves as a coordination point for ATP.

This sequence belongs to the ABC transporter superfamily. Teichoic acids exporter (TC 3.A.1.104.1) family. The complex is composed of two ATP-binding proteins (TagH) and two transmembrane proteins (TagG).

The protein localises to the cell membrane. The enzyme catalyses ATP + H2O + teichoic acidSide 1 = ADP + phosphate + teichoic acidSide 2.. Its function is as follows. Part of the ABC transporter complex TagGH involved in teichoic acids export. Responsible for energy coupling to the transport system. In Staphylococcus aureus (strain USA300), this protein is Teichoic acids export ATP-binding protein TagH.